The following is a 187-amino-acid chain: Threonylcarbamoyl-AMP synthase (187 aa).

Positions 4 to 187 (ILTLDNAVAT…DARSGQILRD (184 aa)) constitute a YrdC-like domain.

The protein belongs to the SUA5 family. TsaC subfamily.

It localises to the cytoplasm. It carries out the reaction L-threonine + hydrogencarbonate + ATP = L-threonylcarbamoyladenylate + diphosphate + H2O. Functionally, required for the formation of a threonylcarbamoyl group on adenosine at position 37 (t(6)A37) in tRNAs that read codons beginning with adenine. Catalyzes the conversion of L-threonine, HCO(3)(-)/CO(2) and ATP to give threonylcarbamoyl-AMP (TC-AMP) as the acyladenylate intermediate, with the release of diphosphate. This is Threonylcarbamoyl-AMP synthase from Xanthomonas oryzae pv. oryzae (strain MAFF 311018).